We begin with the raw amino-acid sequence, 449 residues long: Streptomycin-6-phosphate phosphatase (449 aa).

Residues M1 to A32 form the signal peptide. Residue D50 coordinates Mg(2+). A Zn(2+)-binding site is contributed by D50. S99 serves as the catalytic Phosphoserine intermediate. Mg(2+)-binding residues include D151 and T153. Residues A268–D290 form a disordered region. A Mg(2+)-binding site is contributed by E321. Residues D326, H330, D368, H369, and H412 each contribute to the Zn(2+) site.

Belongs to the alkaline phosphatase family. Mg(2+) is required as a cofactor. Zn(2+) serves as cofactor.

The protein localises to the secreted. The enzyme catalyses streptomycin 6-phosphate + H2O = streptomycin + phosphate. It participates in antibiotic biosynthesis; streptomycin biosynthesis. In terms of biological role, specifically cleaves both streptomycin-6-phosphate and, more slowly, streptomycin-3''-phosphate during the biosynthesis of streptomycin. This Streptomyces griseus protein is Streptomycin-6-phosphate phosphatase (strK).